A 122-amino-acid polypeptide reads, in one-letter code: Large ribosomal subunit protein uL14 (122 aa).

It belongs to the universal ribosomal protein uL14 family. In terms of assembly, part of the 50S ribosomal subunit. Forms a cluster with proteins L3 and L19. In the 70S ribosome, L14 and L19 interact and together make contacts with the 16S rRNA in bridges B5 and B8.

In terms of biological role, binds to 23S rRNA. Forms part of two intersubunit bridges in the 70S ribosome. The chain is Large ribosomal subunit protein uL14 from Chlorobium chlorochromatii (strain CaD3).